The following is a 345-amino-acid chain: Ferrochelatase (345 aa).

The Fe cation site is built by histidine 215 and glutamate 296.

It belongs to the ferrochelatase family.

The protein resides in the cytoplasm. It catalyses the reaction heme b + 2 H(+) = protoporphyrin IX + Fe(2+). Its pathway is porphyrin-containing compound metabolism; protoheme biosynthesis; protoheme from protoporphyrin-IX: step 1/1. Catalyzes the ferrous insertion into protoporphyrin IX. The polypeptide is Ferrochelatase (Rhodopseudomonas palustris (strain BisB5)).